Here is a 685-residue protein sequence, read N- to C-terminus: Potassium-transporting ATPase ATP-binding subunit (685 aa).

Transmembrane regions (helical) follow at residues 36–56 (MFVV…PSIF), 68–88 (LIVT…ESVA), 218–238 (IALN…LVAL), and 255–275 (IALL…AIGI). Asp-306 functions as the 4-aspartylphosphate intermediate in the catalytic mechanism. ATP-binding positions include Asp-343, Glu-347, 375–382 (FTAQTRMS), and Lys-394. Mg(2+) contacts are provided by Asp-517 and Asp-521. 3 consecutive transmembrane segments (helical) span residues 587–607 (FAII…MNIM), 615–635 (AILS…PIAM), and 654–674 (IVFG…IDMI).

It belongs to the cation transport ATPase (P-type) (TC 3.A.3) family. Type IA subfamily. The system is composed of three essential subunits: KdpA, KdpB and KdpC.

The protein resides in the cell membrane. It catalyses the reaction K(+)(out) + ATP + H2O = K(+)(in) + ADP + phosphate + H(+). Its function is as follows. Part of the high-affinity ATP-driven potassium transport (or Kdp) system, which catalyzes the hydrolysis of ATP coupled with the electrogenic transport of potassium into the cytoplasm. This subunit is responsible for energy coupling to the transport system and for the release of the potassium ions to the cytoplasm. This is Potassium-transporting ATPase ATP-binding subunit from Clostridium acetobutylicum (strain ATCC 824 / DSM 792 / JCM 1419 / IAM 19013 / LMG 5710 / NBRC 13948 / NRRL B-527 / VKM B-1787 / 2291 / W).